A 94-amino-acid chain; its full sequence is Putative membrane protein insertion efficiency factor (94 aa).

This sequence belongs to the UPF0161 family.

Its subcellular location is the cell inner membrane. Could be involved in insertion of integral membrane proteins into the membrane. In Albidiferax ferrireducens (strain ATCC BAA-621 / DSM 15236 / T118) (Rhodoferax ferrireducens), this protein is Putative membrane protein insertion efficiency factor.